The sequence spans 178 residues: Large ribosomal subunit protein uL10 (178 aa).

It belongs to the universal ribosomal protein uL10 family. In terms of assembly, part of the ribosomal stalk of the 50S ribosomal subunit. The N-terminus interacts with L11 and the large rRNA to form the base of the stalk. The C-terminus forms an elongated spine to which L12 dimers bind in a sequential fashion forming a multimeric L10(L12)X complex.

In terms of biological role, forms part of the ribosomal stalk, playing a central role in the interaction of the ribosome with GTP-bound translation factors. This chain is Large ribosomal subunit protein uL10, found in Stenotrophomonas maltophilia (strain R551-3).